The chain runs to 275 residues: Large ribosomal subunit protein uL2 (275 aa).

Over residues Glu28 to Ser38 the composition is skewed to basic and acidic residues. Disordered stretches follow at residues Glu28–Gly55 and Ala224–Thr258.

It belongs to the universal ribosomal protein uL2 family. As to quaternary structure, part of the 50S ribosomal subunit. Forms a bridge to the 30S subunit in the 70S ribosome.

Functionally, one of the primary rRNA binding proteins. Required for association of the 30S and 50S subunits to form the 70S ribosome, for tRNA binding and peptide bond formation. It has been suggested to have peptidyltransferase activity; this is somewhat controversial. Makes several contacts with the 16S rRNA in the 70S ribosome. The protein is Large ribosomal subunit protein uL2 of Cellvibrio japonicus (strain Ueda107) (Pseudomonas fluorescens subsp. cellulosa).